Consider the following 61-residue polypeptide: Large ribosomal subunit protein uL30 (61 aa).

The protein belongs to the universal ribosomal protein uL30 family. Part of the 50S ribosomal subunit.

The sequence is that of Large ribosomal subunit protein uL30 from Acidithiobacillus ferrooxidans (strain ATCC 23270 / DSM 14882 / CIP 104768 / NCIMB 8455) (Ferrobacillus ferrooxidans (strain ATCC 23270)).